The primary structure comprises 432 residues: Enolase (432 aa).

Glutamine 164 provides a ligand contact to (2R)-2-phosphoglycerate. The active-site Proton donor is the glutamate 206. Positions 243, 289, and 316 each coordinate Mg(2+). (2R)-2-phosphoglycerate-binding residues include lysine 341, arginine 370, serine 371, and lysine 392. Lysine 341 serves as the catalytic Proton acceptor.

Belongs to the enolase family. The cofactor is Mg(2+).

The protein resides in the cytoplasm. The protein localises to the secreted. Its subcellular location is the cell surface. The enzyme catalyses (2R)-2-phosphoglycerate = phosphoenolpyruvate + H2O. It functions in the pathway carbohydrate degradation; glycolysis; pyruvate from D-glyceraldehyde 3-phosphate: step 4/5. Functionally, catalyzes the reversible conversion of 2-phosphoglycerate (2-PG) into phosphoenolpyruvate (PEP). It is essential for the degradation of carbohydrates via glycolysis. This is Enolase from Borrelia duttonii (strain Ly).